Here is a 307-residue protein sequence, read N- to C-terminus: 2-carboxy-1,4-naphthoquinone phytyltransferase (307 aa).

8 helical membrane-spanning segments follow: residues 27–47 (MYTV…GLTG), 51–71 (GDVF…INLS), 98–118 (LVFL…MSMS), 125–145 (TVLE…GPPF), 147–167 (LGYL…LAIA), 177–197 (FSWN…IILF), 223–243 (LGSQ…AIGV), and 284–304 (FIAV…YGWA).

It belongs to the MenA family. Type 2 subfamily.

The protein resides in the cell inner membrane. The enzyme catalyses 2-carboxy-1,4-naphthoquinone + phytyl diphosphate + H(+) = demethylphylloquinone + CO2 + diphosphate. It functions in the pathway cofactor biosynthesis; phylloquinone biosynthesis. Its function is as follows. Involved in the synthesis of phylloquinone (vitamin K1). Catalyzes the transfer of a prenyl chain to 2-carboxy-1,4-naphthoquinone. This chain is 2-carboxy-1,4-naphthoquinone phytyltransferase, found in Synechocystis sp. (strain ATCC 27184 / PCC 6803 / Kazusa).